Here is a 355-residue protein sequence, read N- to C-terminus: GTPase Obg (355 aa).

The Obg domain occupies 1 to 159; that stretch reads MKLVDEAEIL…RLLKLELKLL (159 aa). Residues 160–342 form the OBG-type G domain; the sequence is ADVGLLGFPN…IMKDVMAFFD (183 aa). Residues 166–173, 191–195, 213–216, 292–295, and 323–325 each bind GTP; these read GFPNAGKS, FTTLY, DVPG, NKAD, and SAL. Mg(2+)-binding residues include Ser173 and Thr193.

The protein belongs to the TRAFAC class OBG-HflX-like GTPase superfamily. OBG GTPase family. As to quaternary structure, monomer. Requires Mg(2+) as cofactor.

Its subcellular location is the cytoplasm. Its function is as follows. An essential GTPase which binds GTP, GDP and possibly (p)ppGpp with moderate affinity, with high nucleotide exchange rates and a fairly low GTP hydrolysis rate. Plays a role in control of the cell cycle, stress response, ribosome biogenesis and in those bacteria that undergo differentiation, in morphogenesis control. In Xanthomonas axonopodis pv. citri (strain 306), this protein is GTPase Obg.